Reading from the N-terminus, the 269-residue chain is Phosphonoacetaldehyde hydrolase (269 aa).

Asp10 (nucleophile) is an active-site residue. Positions 10 and 12 each coordinate Mg(2+). The active-site Schiff-base intermediate with substrate is the Lys52. Position 186 (Asp186) interacts with Mg(2+).

This sequence belongs to the HAD-like hydrolase superfamily. PhnX family. Homodimer. It depends on Mg(2+) as a cofactor.

The catalysed reaction is phosphonoacetaldehyde + H2O = acetaldehyde + phosphate + H(+). In terms of biological role, involved in phosphonate degradation. The chain is Phosphonoacetaldehyde hydrolase from Salmonella paratyphi A (strain ATCC 9150 / SARB42).